The primary structure comprises 666 residues: Non-receptor tyrosine-protein kinase TNK1 (666 aa).

A phosphoserine mark is found at Ser60 and Ser96. The 262-residue stretch at 116–377 folds into the Protein kinase domain; that stretch reads VCRGELLGSG…PSFSHLEGLL (262 aa). ATP contacts are provided by residues 122–130 and Lys148; that span reads LGSGCFGVV. The active-site Proton acceptor is the Asp245. Phosphoserine occurs at positions 255 and 411. Residues 380–445 form the SH3 domain; it reads AGPSEACCVR…PASAVTLADA (66 aa). Residues 446 to 493 form a disordered region; it reads GGLPATRPVHRGTPARGDQHPGSIDGDRKKANLWDAPPARGQRRNMPL. Position 502 is a phosphoserine (Ser502). The tract at residues 506 to 579 is disordered; that stretch reads VLSLGPRPTG…MGMPGARKAA (74 aa). Thr514 bears the Phosphothreonine mark. Ser519 is modified (phosphoserine). The span at 531–541 shows a compositional bias: pro residues; it reads QGPPGLPPRPP. Residues 542-552 show a composition bias toward low complexity; the sequence is LSSSSPQPSQP. The residue at position 582 (Ser582) is a Phosphoserine.

Belongs to the protein kinase superfamily. Tyr protein kinase family. As to quaternary structure, interacts with the SH3 domain of PLCG1 via its Pro-rich domain. Autophosphorylated on tyrosine residues. As to expression, expressed in all umbilical cord blood, bone marrow and adult blood cell sub-populations and in several leukemia cell lines. Highly expressed in fetal blood, brain, lung, liver and kidney. Detected at lower levels in adult prostate, testis, ovary, small intestine and colon. Not expressed in adult lung, liver, kidney or brain.

It localises to the cytoplasm. Its subcellular location is the membrane. It carries out the reaction L-tyrosyl-[protein] + ATP = O-phospho-L-tyrosyl-[protein] + ADP + H(+). Involved in negative regulation of cell growth. Has tumor suppressor properties. Plays a negative regulatory role in the Ras-MAPK pathway. May function in signaling pathways utilized broadly during fetal development and more selectively in adult tissues and in cells of the lymphohematopoietic system. Could specifically be involved in phospholipid signal transduction. The sequence is that of Non-receptor tyrosine-protein kinase TNK1 from Homo sapiens (Human).